A 306-amino-acid chain; its full sequence is MIKQRTLKQAAKVTGIGLHSGKKVTLTLRPAPAHTGIIYARTDLDPVVYFPASAESIRDTQLCTCMINDEGVRISTVEHLNAAMSALGLDNLIVEVDAAEIPIMDGSSSPFIYLLLDAGIEEQDAPKKFIRIKESVRVEEGDKWAEFKPYSHGLKLDFTIDFTHPMITKEVRNYKMEFSAQHFIQQLSRARTFTFMKDVEYLQSIGLALGGSLDNAIVLDEYRILNEEGLRFKDELVRHKMLDAVGDLFMCGYNILGDFKAYKSGHSLNNKLLRAVLANENAWEFVTFDDKAEVPQGYQVTEQVFI.

Zn(2+)-binding residues include His79, His239, and Asp243. His266 serves as the catalytic Proton donor.

The protein belongs to the LpxC family. Zn(2+) serves as cofactor.

The enzyme catalyses a UDP-3-O-[(3R)-3-hydroxyacyl]-N-acetyl-alpha-D-glucosamine + H2O = a UDP-3-O-[(3R)-3-hydroxyacyl]-alpha-D-glucosamine + acetate. It participates in glycolipid biosynthesis; lipid IV(A) biosynthesis; lipid IV(A) from (3R)-3-hydroxytetradecanoyl-[acyl-carrier-protein] and UDP-N-acetyl-alpha-D-glucosamine: step 2/6. Functionally, catalyzes the hydrolysis of UDP-3-O-myristoyl-N-acetylglucosamine to form UDP-3-O-myristoylglucosamine and acetate, the committed step in lipid A biosynthesis. In Glaesserella parasuis serovar 5 (strain SH0165) (Haemophilus parasuis), this protein is UDP-3-O-acyl-N-acetylglucosamine deacetylase.